Consider the following 568-residue polypeptide: Potassium-transporting ATPase potassium-binding subunit (568 aa).

The next 10 membrane-spanning stretches (helical) occupy residues 7-27 (AEIAFILGLTVALGWPLGLFL), 65-85 (SYALALLAFSAASFILLYAIL), 135-155 (AGLTSHNFLSAAAGIAVAAAV), 177-197 (VSLYLLLPLSIVIALVFVALG), 254-274 (LTNLIEIVEMNVLGFACVVAF), 286-306 (ALITVMAIFVAVAASVIYWTE), 383-403 (GLYGMIVLALIAVFVAGLMVG), 422-442 (MLAVLILPLAILGFSAAAAVL), 489-509 (LGIAMLLGRFGYVIPVLAIAG), and 530-550 (LFIGLLIGVILILGGLQFFPA).

This sequence belongs to the KdpA family. In terms of assembly, the system is composed of three essential subunits: KdpA, KdpB and KdpC.

The protein resides in the cell inner membrane. In terms of biological role, part of the high-affinity ATP-driven potassium transport (or Kdp) system, which catalyzes the hydrolysis of ATP coupled with the electrogenic transport of potassium into the cytoplasm. This subunit binds the periplasmic potassium ions and delivers the ions to the membrane domain of KdpB through an intramembrane tunnel. The sequence is that of Potassium-transporting ATPase potassium-binding subunit from Beijerinckia indica subsp. indica (strain ATCC 9039 / DSM 1715 / NCIMB 8712).